The primary structure comprises 144 residues: Peptide methionine sulfoxide reductase MsrB (144 aa).

One can recognise a MsrB domain in the interval 6–128 (KDELKKKLTP…NSAALRFIPK (123 aa)). Cysteine 117 (nucleophile) is an active-site residue.

This sequence belongs to the MsrB Met sulfoxide reductase family.

It catalyses the reaction L-methionyl-[protein] + [thioredoxin]-disulfide + H2O = L-methionyl-(R)-S-oxide-[protein] + [thioredoxin]-dithiol. In Shouchella clausii (strain KSM-K16) (Alkalihalobacillus clausii), this protein is Peptide methionine sulfoxide reductase MsrB.